Consider the following 296-residue polypeptide: Ribosomal RNA small subunit methyltransferase H (296 aa).

S-adenosyl-L-methionine contacts are provided by residues 41–43, Asp-59, Phe-86, Asp-104, and Gln-111; that span reads GGY.

This sequence belongs to the methyltransferase superfamily. RsmH family.

It is found in the cytoplasm. It carries out the reaction cytidine(1402) in 16S rRNA + S-adenosyl-L-methionine = N(4)-methylcytidine(1402) in 16S rRNA + S-adenosyl-L-homocysteine + H(+). Its function is as follows. Specifically methylates the N4 position of cytidine in position 1402 (C1402) of 16S rRNA. This chain is Ribosomal RNA small subunit methyltransferase H, found in Neorickettsia sennetsu (strain ATCC VR-367 / Miyayama) (Ehrlichia sennetsu).